A 219-amino-acid chain; its full sequence is Thymidylate kinase (219 aa).

Residue 7–14 participates in ATP binding; sequence GIDGAGKS.

The protein belongs to the thymidylate kinase family.

It catalyses the reaction dTMP + ATP = dTDP + ADP. Its function is as follows. Phosphorylation of dTMP to form dTDP in both de novo and salvage pathways of dTTP synthesis. The protein is Thymidylate kinase of Chlorobium phaeobacteroides (strain DSM 266 / SMG 266 / 2430).